Here is a 101-residue protein sequence, read N- to C-terminus: Integration host factor subunit beta (101 aa).

This sequence belongs to the bacterial histone-like protein family. In terms of assembly, heterodimer of an alpha and a beta chain.

This protein is one of the two subunits of integration host factor, a specific DNA-binding protein that functions in genetic recombination as well as in transcriptional and translational control. The protein is Integration host factor subunit beta of Rhodopseudomonas palustris (strain BisB5).